Reading from the N-terminus, the 251-residue chain is Coproheme decarboxylase (251 aa).

Fe-coproporphyrin III-binding positions include Arg133, 147–151 (YPMSK), His174, Gln187, and Ser225. The active site involves Tyr147.

This sequence belongs to the ChdC family. Type 1 subfamily. Requires Fe-coproporphyrin III as cofactor.

It catalyses the reaction Fe-coproporphyrin III + 2 H2O2 + 2 H(+) = heme b + 2 CO2 + 4 H2O. The enzyme catalyses Fe-coproporphyrin III + H2O2 + H(+) = harderoheme III + CO2 + 2 H2O. It carries out the reaction harderoheme III + H2O2 + H(+) = heme b + CO2 + 2 H2O. The protein operates within porphyrin-containing compound metabolism; protoheme biosynthesis. Involved in coproporphyrin-dependent heme b biosynthesis. Catalyzes the decarboxylation of Fe-coproporphyrin III (coproheme) to heme b (protoheme IX), the last step of the pathway. The reaction occurs in a stepwise manner with a three-propionate intermediate. This chain is Coproheme decarboxylase, found in Listeria monocytogenes serotype 4b (strain CLIP80459).